The following is a 20-amino-acid chain: ANNPGARKAIRKIEARTEVN.

The tract at residues 1–20 is disordered; the sequence is ANNPGARKAIRKIEARTEVN. The segment covering 11-20 has biased composition (basic and acidic residues); that stretch reads RKIEARTEVN.

This sequence belongs to the bacterial ribosomal protein bS20 family.

Functionally, binds directly to 16S ribosomal RNA. In Brevundimonas vesicularis (Pseudomonas vesicularis), this protein is Small ribosomal subunit protein bS20 (rpsT).